The chain runs to 394 residues: MASQDCHMLLSFFISTFLITVVTSQTRCRNFKSIISFGDSITDTGNLLGLSSPNDLPESAFPPYGETFFHHPSGRFSDGRLIIDFIAEFLGIPHVPPFYGSKNGNFEKGVNFAVGGATALECSVLEEKGTHCSQSNISLGNQLKSFKESLPYLCGSSSPDCRDMIENAFILIGEIGGNDYNFPLFDRKNIEEVKELVPLVITTISSAISELVDMGARTFLVPGNFPLGCSVAYLTLYETPNKEEYNPLTGCLTWLNDFSVYHNEQLQAELKRLRNLYPHVNIIYGDYYNTLLRLMQEPSKFGLMDRPLPACCGLGGPYNFTFSIKCGSKGVEYCSDPSKYVNWDGIHMTEAAYKWISEGVLTGPYAIPPFNWSCLDSKIKNNESLHTQYSLMNS.

Residues 1-24 form the signal peptide; it reads MASQDCHMLLSFFISTFLITVVTS. The active-site Nucleophile is Ser-40. N-linked (GlcNAc...) asparagine glycans are attached at residues Asn-136 and Asn-319. Catalysis depends on residues Asp-344 and His-347. N-linked (GlcNAc...) asparagine glycosylation is found at Asn-371 and Asn-382.

It belongs to the 'GDSL' lipolytic enzyme family.

It localises to the secreted. The polypeptide is GDSL esterase/lipase At2g27360 (Arabidopsis thaliana (Mouse-ear cress)).